Reading from the N-terminus, the 702-residue chain is Sodium/hydrogen exchanger 6 (702 aa).

The next 12 helical transmembrane spans lie at 72-92 (SANLLIFILLLTLTILTIWLF), 104-124 (GLAMIYGLLVGLVLRYGIHVP), 177-197 (VTFDPEVFFNILLPPIIFYAG), 212-232 (ILAYAFLGTAISCFVIGSIMY), 253-273 (CLLFGAIVSATDPVTVLAIFH), 279-299 (VELYALLFGESVLNDAVAIVL), 325-345 (IGIFLGIFSGSFAMGAATGVV), 373-393 (TFLLAEAWGFTGVVAVLFCGI), 415-435 (FELLNFLAENFIFSYMGLTLF), 437-457 (FQNHVFNPTFVVGAFIAIFLG), 480-500 (NFQHMMMFAGLRGAMAFALAI), and 516-536 (LLIVFFTVWVFGGGTTAMLSC).

The protein belongs to the monovalent cation:proton antiporter 1 (CPA1) transporter (TC 2.A.36) family. Homodimer. Interacts with RACK1; regulates the distribution of SLC9A6 between endosomes and the plasma membrane. Post-translationally, ubiquitinated (in vitro). In terms of processing, glycosylated.

The protein localises to the endosome membrane. It is found in the recycling endosome membrane. It localises to the early endosome membrane. Its subcellular location is the late endosome membrane. The protein resides in the cell membrane. The catalysed reaction is Na(+)(in) + H(+)(out) = Na(+)(out) + H(+)(in). It carries out the reaction K(+)(in) + H(+)(out) = K(+)(out) + H(+)(in). Endosomal Na(+), K(+)/H(+) antiporter. Mediates the electroneutral exchange of endosomal luminal H(+) for a cytosolic Na(+) or K(+). By facilitating proton efflux, SLC9A6 counteracts the acidity generated by vacuolar (V)-ATPase, thereby limiting luminal acidification. Responsible for alkalizing and maintaining the endosomal pH, and consequently in, e.g., endosome maturation and trafficking of recycling endosomal cargo. Plays a critical role during neurodevelopment by regulating synaptic development and plasticity. Implicated in the maintenance of cell polarity in a manner that is dependent on its ability to modulate intravesicular pH. Regulates intracelular pH in some specialized cells, osteoclasts and stereocilia where this transporter localizes to the plasma membrane. In Mus musculus (Mouse), this protein is Sodium/hydrogen exchanger 6 (Slc9a6).